A 351-amino-acid polypeptide reads, in one-letter code: Inner kinetochore subunit fta2 (351 aa).

Positions 1–71 are disordered; the sequence is MSGRRYSQIS…SSNGRVDTDR (71 aa). The span at 7–18 shows a compositional bias: low complexity; sequence SQISQQEGSSSS. A compositionally biased stretch (polar residues) spans 54 to 66; sequence NENSGQSKSSNGR.

The protein belongs to the CENP-P/CTF19 family. As to quaternary structure, component of the heterotetrameric kinetochore subcomplex COMA, which consists of fta2, fta7, mal2 and mis17. The COMA subcomplex is part of a larger constitutive centromere-associated network (CCAN) (also known as central kinetochore Sim4 complex in fission yeast), which is composed of at least cnl2, cnp3, cnp20, fta1, fta2, fta3, fta4, fta6, fta7, mal2, mhf1, mhf2, mis6, mis15, mis17, sim4 and wip1.

The protein localises to the nucleus. It is found in the chromosome. It localises to the centromere. Its subcellular location is the kinetochore. Component of the kinetochore, a multiprotein complex that assembles on centromeric DNA and attaches chromosomes to spindle microtubules, mediating chromosome segregation and sister chromatid segregation during meiosis and mitosis. Component of the inner kinetochore COMA complex, which connects centromere-associated proteins and the outer kinetochore. COMA interacts with other inner kinetochore proteins to form the inner kinetochore constitutive centromere-associated network (CCAN), which serves as a structural platform for outer kinetochore assembly. Fta2, fta3 and fta4 associate with the central core (cnt) and inner repeat (inr) region of the centromere. In Schizosaccharomyces pombe (strain 972 / ATCC 24843) (Fission yeast), this protein is Inner kinetochore subunit fta2 (fta2).